Consider the following 327-residue polypeptide: G protein pathway suppressor 2 (327 aa).

A coiled-coil region spans residues 14–109 (MARALHRHIM…RRRKEQSDLT (96 aa)). Residues 26 to 65 (RERKRQEEEEVDKMMEQKMKEEQERRKKKEMEERMSLEET) form a disordered region. Residues Lys45 and Lys71 each participate in a glycyl lysine isopeptide (Lys-Gly) (interchain with G-Cter in SUMO1) cross-link. An interaction with SUMO region spans residues 61 to 94 (SLEETKEQILKLQEKLSALQEEKHQLFLQLKKVL). Disordered stretches follow at residues 178-208 (GQFQGSPGGAYGTAQPPPHYGPTQPAYSPSQ), 253-285 (QKQMEHANQQTSFSDSSSLRPMHPQALHPAPGL), and 300-327 (KSGFATTSQPGPRLPFIQHSQNPRFYHK). Residues 253–271 (QKQMEHANQQTSFSDSSSL) are compositionally biased toward polar residues. The residue at position 312 (Arg312) is an Asymmetric dimethylarginine. Polar residues predominate over residues 317 to 327 (QHSQNPRFYHK). Arg323 is modified (asymmetric dimethylarginine; alternate). Arg323 is modified (omega-N-methylarginine; alternate).

As to quaternary structure, component of the N-Cor repressor complex, at least composed of NCOR1, NCOR2, HDAC3, TBL1X, TBL1R, CORO2A and GPS2. Interacts (when sumoylated at Lys-71) with TBL1X; leading to protect GPS2 from degradation by the proteasome. Interacts with UBE2N; leading to inhibit UBE2N/Ubc13 activity. Interacts with TRAF1. Interacts with TRAF2. Interacts with TRAF6. Interacts with PPARG (when in the liganded conformation). Interacts with (sumoylated) NR1H2; interaction with sumoylated NR1H2 and NR5A2 onto hepatic acute phase protein promoters prevents N-Cor corepressor complex dissociation. Interacts with (sumoylated) NR5A2; interaction with sumoylated NR1H2 and NR5A2 onto hepatic acute phase protein promoters prevents N-Cor corepressor complex dissociation. Interacts with NR1H3. Interacts with RFX4. Interacts with ANKRD26. Sumoylation regulates its subcellular location. Sumoylation at Lys-45 and Lys-71 regulates the shuttling between the cytoplasm and the nucleus. Sumoylation at Lys-71 is required for interaction with TBL1X. Sumoylated at Lys-45 and Lys-71 in mitochondrion. Desumoylation by SENP1 leads to relocation from the mitochondria to the nucleus. In terms of processing, ubiquitinated at the C-terminus by SIAH2; leading to its degradation by the proteasome. Interaction with TBL1X and methylation at Arg-323 protect GPS2 against ubiquitination and degradation. Post-translationally, methylated at Arg-312 and Arg-323 by PRMT6. Methylation at Arg-323 protects from degradation by the proteasome.

The protein resides in the nucleus. The protein localises to the mitochondrion. Its subcellular location is the cytoplasm. It is found in the cytosol. Functionally, key regulator of inflammation, lipid metabolism and mitochondrion homeostasis that acts by inhibiting the activity of the ubiquitin-conjugating enzyme UBE2N/Ubc13, thereby inhibiting 'Lys-63'-linked ubiquitination. In the nucleus, can both acts as a corepressor and coactivator of transcription, depending on the context. Acts as a transcription coactivator in adipocytes by promoting the recruitment of PPARG to promoters: acts by inhibiting the activity of the ubiquitin-conjugating enzyme UBE2N/Ubc13, leading to stabilization of KDM4A and subsequent histone H3 'Lys-9' (H3K9) demethylation. Promotes cholesterol efflux by acting as a transcription coactivator. Acts as a regulator of B-cell development by inhibiting UBE2N/Ubc13, thereby restricting the activation of Toll-like receptors (TLRs) and B-cell antigen receptors (BCRs) signaling pathways. Acts as a key mediator of mitochondrial stress response: in response to mitochondrial depolarization, relocates from the mitochondria to the nucleus following desumoylation and specifically promotes expression of nuclear-encoded mitochondrial genes. Promotes transcription of nuclear-encoded mitochondrial genes by inhibiting UBE2N/Ubc13. Can also act as a corepressor as part of the N-Cor repressor complex by repressing active PPARG. Plays an anti-inflammatory role in macrophages and is required for insulin sensitivity by acting as a corepressor. Plays an anti-inflammatory role during the hepatic acute phase response by interacting with sumoylated NR1H2 and NR5A2 proteins, thereby preventing N-Cor corepressor complex dissociation. In the cytosol, also plays a non-transcriptional role by regulating insulin signaling and pro-inflammatory pathways. In the cytoplasm, acts as a negative regulator of inflammation by inhibiting the pro-inflammatory TNF-alpha pathway; acts by repressing UBE2N/Ubc13 activity. In the cytoplasm of adipocytes, restricts the activation of insulin signaling via inhibition of UBE2N/Ubc13-mediated ubiquitination of AKT. Able to suppress G-protein- and mitogen-activated protein kinase-mediated signal transduction. This chain is G protein pathway suppressor 2, found in Mus musculus (Mouse).